The following is a 541-amino-acid chain: Tryptophan N-monooxygenase 1 (541 aa).

A helical membrane pass occupies residues 21–41 (FSTLYLLSTLQAFVAITLVML). Position 477 (C477) interacts with heme.

The protein belongs to the cytochrome P450 family. The cofactor is heme. As to expression, found in all tissues tested. Highest expression in roots, and low expression in stem.

Its subcellular location is the membrane. It carries out the reaction L-tryptophan + 2 reduced [NADPH--hemoprotein reductase] + 2 O2 = (E)-(indol-3-yl)acetaldehyde oxime + 2 oxidized [NADPH--hemoprotein reductase] + CO2 + 3 H2O + 2 H(+). Functionally, converts tryptophan to indole-3-acetaldoxime, a precursor for tryptophan-derived glucosinolates and indole-3-acetic acid (IAA). Involved in the biosynthetic pathway to 4-hydroxyindole-3-carbonyl nitrile (4-OH-ICN), a cyanogenic metabolite required for inducible pathogen defense. The sequence is that of Tryptophan N-monooxygenase 1 (CYP79B2) from Arabidopsis thaliana (Mouse-ear cress).